A 364-amino-acid chain; its full sequence is Protein RecA (364 aa).

77 to 84 (GPESSGKT) is a binding site for ATP. The disordered stretch occupies residues 343–364 (DRFLQNGGPDPDDGDGDATAEM). The segment covering 352 to 364 (DPDDGDGDATAEM) has biased composition (acidic residues).

Belongs to the RecA family.

It is found in the cytoplasm. In terms of biological role, can catalyze the hydrolysis of ATP in the presence of single-stranded DNA, the ATP-dependent uptake of single-stranded DNA by duplex DNA, and the ATP-dependent hybridization of homologous single-stranded DNAs. It interacts with LexA causing its activation and leading to its autocatalytic cleavage. The polypeptide is Protein RecA (Rhizobium johnstonii (strain DSM 114642 / LMG 32736 / 3841) (Rhizobium leguminosarum bv. viciae)).